The following is a 220-amino-acid chain: Deoxyribose-phosphate aldolase 2 (220 aa).

Asp-89 serves as the catalytic Proton donor/acceptor. The active-site Schiff-base intermediate with acetaldehyde is the Lys-151. The active-site Proton donor/acceptor is Lys-180.

It belongs to the DeoC/FbaB aldolase family. DeoC type 1 subfamily.

Its subcellular location is the cytoplasm. It catalyses the reaction 2-deoxy-D-ribose 5-phosphate = D-glyceraldehyde 3-phosphate + acetaldehyde. Its pathway is carbohydrate degradation; 2-deoxy-D-ribose 1-phosphate degradation; D-glyceraldehyde 3-phosphate and acetaldehyde from 2-deoxy-alpha-D-ribose 1-phosphate: step 2/2. Functionally, catalyzes a reversible aldol reaction between acetaldehyde and D-glyceraldehyde 3-phosphate to generate 2-deoxy-D-ribose 5-phosphate. The polypeptide is Deoxyribose-phosphate aldolase 2 (Staphylococcus aureus (strain N315)).